The following is a 94-amino-acid chain: uncharacterized protein (94 aa).

Residues 1-22 (MIMKNCLLLGALLMGFTGVAMA) form the signal peptide.

This is an uncharacterized protein from Escherichia coli (strain K12).